We begin with the raw amino-acid sequence, 197 residues long: Small ribosomal subunit protein uS4B (197 aa).

One can recognise an S4 RNA-binding domain in the interval 88–150 (SRLDNMVYRM…SRKTEMFVNN (63 aa)).

This sequence belongs to the universal ribosomal protein uS4 family. As to quaternary structure, part of the 30S ribosomal subunit. Contacts protein S5. The interaction surface between S4 and S5 is involved in control of translational fidelity.

Functionally, one of the primary rRNA binding proteins, it binds directly to 16S rRNA where it nucleates assembly of the body of the 30S subunit. In terms of biological role, with S5 and S12 plays an important role in translational accuracy. This is Small ribosomal subunit protein uS4B from Clostridium perfringens (strain SM101 / Type A).